We begin with the raw amino-acid sequence, 92 residues long: C-C motif chemokine 3 (92 aa).

An N-terminal signal peptide occupies residues 1 to 26; it reads MQVSTAALAVLLCTVALCNRISATFA. Intrachain disulfides connect Cys-33-Cys-57 and Cys-34-Cys-73.

Belongs to the intercrine beta (chemokine CC) family. In terms of assembly, self-associates. Also heterodimer of MIP-1-alpha(4-69) and MIP-1-beta(3-69). Interacts with CCR1.

The protein localises to the secreted. Monokine with inflammatory and chemokinetic properties. Binds to CCR1, CCR4 and CCR5. One of the major HIV-suppressive factors produced by CD8+ T-cells. Recombinant MIP-1-alpha induces a dose-dependent inhibition of different strains of HIV-1, HIV-2, and simian immunodeficiency virus (SIV). The polypeptide is C-C motif chemokine 3 (CCL3) (Macaca mulatta (Rhesus macaque)).